The following is a 337-amino-acid chain: Ketol-acid reductoisomerase (NADP(+)) (337 aa).

Positions 2–182 (AKIFYDNDAD…GATRAGVLLT (181 aa)) constitute a KARI N-terminal Rossmann domain. NADP(+)-binding positions include 25-28 (YGSQ), serine 51, serine 53, and 83-86 (DTSQ). Residue histidine 108 is part of the active site. Glycine 134 is a binding site for NADP(+). In terms of domain architecture, KARI C-terminal knotted spans 183–328 (TFAEETETDL…ANLRKMMPFI (146 aa)). Mg(2+) contacts are provided by aspartate 191, glutamate 195, glutamate 227, and glutamate 231. Serine 252 is a binding site for substrate.

Belongs to the ketol-acid reductoisomerase family. Requires Mg(2+) as cofactor.

It carries out the reaction (2R)-2,3-dihydroxy-3-methylbutanoate + NADP(+) = (2S)-2-acetolactate + NADPH + H(+). It catalyses the reaction (2R,3R)-2,3-dihydroxy-3-methylpentanoate + NADP(+) = (S)-2-ethyl-2-hydroxy-3-oxobutanoate + NADPH + H(+). It functions in the pathway amino-acid biosynthesis; L-isoleucine biosynthesis; L-isoleucine from 2-oxobutanoate: step 2/4. It participates in amino-acid biosynthesis; L-valine biosynthesis; L-valine from pyruvate: step 2/4. Functionally, involved in the biosynthesis of branched-chain amino acids (BCAA). Catalyzes an alkyl-migration followed by a ketol-acid reduction of (S)-2-acetolactate (S2AL) to yield (R)-2,3-dihydroxy-isovalerate. In the isomerase reaction, S2AL is rearranged via a Mg-dependent methyl migration to produce 3-hydroxy-3-methyl-2-ketobutyrate (HMKB). In the reductase reaction, this 2-ketoacid undergoes a metal-dependent reduction by NADPH to yield (R)-2,3-dihydroxy-isovalerate. This is Ketol-acid reductoisomerase (NADP(+)) from Sorangium cellulosum (strain So ce56) (Polyangium cellulosum (strain So ce56)).